The following is a 123-amino-acid chain: MSWFKQLWQNSREKGQYYELQAQKYLVSQGLTAIERNYYCPFGELDVIMKDGNTLVFVEVKFRKNHARGGANYALSIQKQARLKRSIYHYLAAKNLTNQPLRIDYVAITGEPSMHINWLKNVF.

The protein belongs to the UPF0102 family.

This Pseudoalteromonas translucida (strain TAC 125) protein is UPF0102 protein PSHAa2523.